Consider the following 238-residue polypeptide: ATP synthase subunit a (238 aa).

The next 4 helical transmembrane spans lie at 17-37, 80-100, 112-132, and 194-214; these read LSNI…AIIC, ITLL…QIAI, DPIV…YYGI, and IFVG…SIFI.

This sequence belongs to the ATPase A chain family. As to quaternary structure, F-type ATPases have 2 components, CF(1) - the catalytic core - and CF(0) - the membrane proton channel. CF(1) has five subunits: alpha(3), beta(3), gamma(1), delta(1), epsilon(1). CF(0) has three main subunits: a(1), b(2) and c(9-12). The alpha and beta chains form an alternating ring which encloses part of the gamma chain. CF(1) is attached to CF(0) by a central stalk formed by the gamma and epsilon chains, while a peripheral stalk is formed by the delta and b chains.

Its subcellular location is the cell membrane. Functionally, key component of the proton channel; it plays a direct role in the translocation of protons across the membrane. In Listeria innocua serovar 6a (strain ATCC BAA-680 / CLIP 11262), this protein is ATP synthase subunit a.